A 103-amino-acid polypeptide reads, in one-letter code: UPF0145 protein CYB_1351 (103 aa).

This sequence belongs to the UPF0145 family.

This chain is UPF0145 protein CYB_1351, found in Synechococcus sp. (strain JA-2-3B'a(2-13)) (Cyanobacteria bacterium Yellowstone B-Prime).